Consider the following 272-residue polypeptide: Imidazole glycerol phosphate synthase subunit HisF (272 aa).

Catalysis depends on residues aspartate 11 and aspartate 130.

This sequence belongs to the HisA/HisF family. Heterodimer of HisH and HisF.

The protein resides in the cytoplasm. It catalyses the reaction 5-[(5-phospho-1-deoxy-D-ribulos-1-ylimino)methylamino]-1-(5-phospho-beta-D-ribosyl)imidazole-4-carboxamide + L-glutamine = D-erythro-1-(imidazol-4-yl)glycerol 3-phosphate + 5-amino-1-(5-phospho-beta-D-ribosyl)imidazole-4-carboxamide + L-glutamate + H(+). It participates in amino-acid biosynthesis; L-histidine biosynthesis; L-histidine from 5-phospho-alpha-D-ribose 1-diphosphate: step 5/9. Its function is as follows. IGPS catalyzes the conversion of PRFAR and glutamine to IGP, AICAR and glutamate. The HisF subunit catalyzes the cyclization activity that produces IGP and AICAR from PRFAR using the ammonia provided by the HisH subunit. The sequence is that of Imidazole glycerol phosphate synthase subunit HisF from Methanococcus maripaludis (strain C5 / ATCC BAA-1333).